Here is a 141-residue protein sequence, read N- to C-terminus: Large ribosomal subunit protein uL13 (141 aa).

Belongs to the universal ribosomal protein uL13 family. In terms of assembly, part of the 50S ribosomal subunit.

Its function is as follows. This protein is one of the early assembly proteins of the 50S ribosomal subunit, although it is not seen to bind rRNA by itself. It is important during the early stages of 50S assembly. This Helicobacter pylori (strain Shi470) protein is Large ribosomal subunit protein uL13.